Reading from the N-terminus, the 156-residue chain is ATP synthase subunit b (156 aa).

The helical transmembrane segment at 7–27 (LIVQMLVFVVFIGLTMKFIWP) threads the bilayer.

Belongs to the ATPase B chain family. In terms of assembly, F-type ATPases have 2 components, F(1) - the catalytic core - and F(0) - the membrane proton channel. F(1) has five subunits: alpha(3), beta(3), gamma(1), delta(1), epsilon(1). F(0) has three main subunits: a(1), b(2) and c(10-14). The alpha and beta chains form an alternating ring which encloses part of the gamma chain. F(1) is attached to F(0) by a central stalk formed by the gamma and epsilon chains, while a peripheral stalk is formed by the delta and b chains.

It is found in the cell inner membrane. Its function is as follows. F(1)F(0) ATP synthase produces ATP from ADP in the presence of a proton or sodium gradient. F-type ATPases consist of two structural domains, F(1) containing the extramembraneous catalytic core and F(0) containing the membrane proton channel, linked together by a central stalk and a peripheral stalk. During catalysis, ATP synthesis in the catalytic domain of F(1) is coupled via a rotary mechanism of the central stalk subunits to proton translocation. Component of the F(0) channel, it forms part of the peripheral stalk, linking F(1) to F(0). The protein is ATP synthase subunit b of Coxiella burnetii (strain CbuK_Q154) (Coxiella burnetii (strain Q154)).